Reading from the N-terminus, the 95-residue chain is Auxin-responsive protein SAUR27 (95 aa).

Belongs to the ARG7 family. Interacts with PP2C-D1. In terms of tissue distribution, higher expression in thermo-responsive cultivars (e.g. cv. Alst-1, cv. Ang-0 and cv. Com-0) than in low thermo-responsive cultivars (e.g. cv. Dja-1, cv. El-0 and cv. Kon).

The protein localises to the cell membrane. Functions as a positive effector of cell expansion through modulation of auxin transport. Involved in thermo-responsiveness of plant architecture. Enhances plasma membrane H(+)-ATPase. The protein is Auxin-responsive protein SAUR27 of Arabidopsis thaliana (Mouse-ear cress).